The following is a 245-amino-acid chain: MNPKSNPDTIFSAPIDKIGDFTFDERVAEVFPDMIQRSVPGYSNIISAIGMLAERFVKPHSNVYDLGCSLGAATLSMRRHIKQEGCQIIAVDNSKAMVERCKLHVNAYRSDTPVNVIEADIRHIDIENASVVVLNFTLQFLSPEDRYVLLEKIYAGLRPGGILILSEKYVFEDQVSNELLIDLHHDFKRANGYSELEISQKRSAIENVMRPDSKKQHKERFAQIGFSSYDVWFQCFNFGSMFAIK.

S-adenosyl-L-methionine is bound by residues Tyr42, 67 to 69 (GCS), 92 to 93 (DN), 120 to 121 (DI), Asn135, and Arg202.

This sequence belongs to the class I-like SAM-binding methyltransferase superfamily. Cx-SAM synthase family. Homodimer.

It carries out the reaction prephenate + S-adenosyl-L-methionine = carboxy-S-adenosyl-L-methionine + 3-phenylpyruvate + H2O. Catalyzes the conversion of S-adenosyl-L-methionine (SAM) to carboxy-S-adenosyl-L-methionine (Cx-SAM). This is Carboxy-S-adenosyl-L-methionine synthase from Vibrio vulnificus (strain CMCP6).